Here is a 270-residue protein sequence, read N- to C-terminus: UPF0162 protein PA3419 (270 aa).

Belongs to the UPF0162 family.

The polypeptide is UPF0162 protein PA3419 (Pseudomonas aeruginosa (strain ATCC 15692 / DSM 22644 / CIP 104116 / JCM 14847 / LMG 12228 / 1C / PRS 101 / PAO1)).